Reading from the N-terminus, the 169-residue chain is Secreted LysM effector Blys5 (169 aa).

An N-terminal signal peptide occupies residues Met1–Ala19. LysM domains are found at residues Thr47–Val94 and Gln121–Val167.

This sequence belongs to the secreted LysM effector family.

In terms of biological role, secreted effector that enables the plant pathogenic fungus to manipulate host defenses for successful infection. Required for the full virulence to infect insect hosts. Protects fungal hyphae against the hydrolytic activity of chitinase and plays an important role in evasion of insect immunities. Binds chitin and can additionally bind chitosan and cellulose. Coats and protects the cell walls of insect pathogens from host cell recognition and additionally shields fungal cells from the hydrolysis of insect chitinases. The polypeptide is Secreted LysM effector Blys5 (Beauveria bassiana (strain ARSEF 2860) (White muscardine disease fungus)).